The following is a 237-amino-acid chain: Ribonuclease PH (237 aa).

Phosphate-binding positions include Arg86 and 124 to 126 (GTR).

It belongs to the RNase PH family. In terms of assembly, homohexameric ring arranged as a trimer of dimers.

The catalysed reaction is tRNA(n+1) + phosphate = tRNA(n) + a ribonucleoside 5'-diphosphate. In terms of biological role, phosphorolytic 3'-5' exoribonuclease that plays an important role in tRNA 3'-end maturation. Removes nucleotide residues following the 3'-CCA terminus of tRNAs; can also add nucleotides to the ends of RNA molecules by using nucleoside diphosphates as substrates, but this may not be physiologically important. Probably plays a role in initiation of 16S rRNA degradation (leading to ribosome degradation) during starvation. The chain is Ribonuclease PH from Methylobacterium radiotolerans (strain ATCC 27329 / DSM 1819 / JCM 2831 / NBRC 15690 / NCIMB 10815 / 0-1).